Consider the following 356-residue polypeptide: MRRELLLEKIETYKAIMPWYVLDYYQSQLAVPYRFTTLYEYLKEYKRFFDWLMDADLTQAPKIADIDLSTLEHLTKKDLEAFVLYLRERPSLNTYSTKEGLSQTTINRTLSALSSLYKYLTEEVENDQGEPYFYRNVMKKVSTKKKKETLASRAENIKQKLFLGDETLAFLDYVDKEYEQKLSNRAKSSFRKNKERDLAIIALLLASGVRLSEAVNLDLKDVNLNMMIIEVIRKGGKRDSVNVAGFAKGYLESYLAVRQRRYKAEKQDLAFFLTEYRGVPNRMDASSIEKMVGKYSEDFKIRVTPHKLRHTLATRLYDATKSQVLVSHQLGHSSTQVTDLYTHIVNDEQKNALDNL.

The Core-binding (CB) domain occupies 16–121 (IMPWYVLDYY…ALSSLYKYLT (106 aa)). A Tyr recombinase domain is found at 169-354 (AFLDYVDKEY…VNDEQKNALD (186 aa)). Active-site residues include R210, K234, H306, R309, and H332. Y341 functions as the O-(3'-phospho-DNA)-tyrosine intermediate in the catalytic mechanism.

It belongs to the 'phage' integrase family. XerS subfamily.

The protein localises to the cytoplasm. FtsK is required for recombination. In terms of biological role, site-specific tyrosine recombinase, which acts by catalyzing the cutting and rejoining of the recombining DNA molecules. Essential to convert dimers of the bacterial chromosome into monomers to permit their segregation at cell division. The chain is Tyrosine recombinase XerS from Streptococcus pyogenes serotype M49 (strain NZ131).